We begin with the raw amino-acid sequence, 255 residues long: Coniferyl-alcohol dehydrogenase (255 aa).

NAD(+)-binding positions include 12-17 (GVSSGI), Asp36, 51-52 (DL), and Gly77. Position 117 (Ser117) interacts with substrate. 2 residues coordinate NAD(+): Tyr157 and Lys161. The active-site Proton acceptor is the Tyr157.

This sequence belongs to the short-chain dehydrogenases/reductases (SDR) family.

It catalyses the reaction (E)-coniferol + NADP(+) = (E)-coniferaldehyde + NADPH + H(+). Functionally, catalyzes the conversion of coniferyl alcohol into coniferyl aldehyde in the eugenol degradation pathway. Specific for coniferyl alcohol; does not act on cinnamyl alcohol, 4-coumaryl alcohol or sinapyl alcohol. In Pseudomonas sp. (strain HR199 / DSM 7063), this protein is Coniferyl-alcohol dehydrogenase (calA).